We begin with the raw amino-acid sequence, 506 residues long: NAD(P)H-quinone oxidoreductase subunit 2 (506 aa).

A run of 13 helical transmembrane segments spans residues 14-34 (AIIP…VDLA), 42-62 (WAPI…ALQW), 79-99 (LAIA…LISW), 108-128 (PIGE…LLCG), 132-152 (LISV…LSGY), 167-187 (LLVG…LYGL), 206-226 (FITS…IAAV), 240-260 (PTPV…AFAI), 276-296 (LLFT…ALAQ), 302-322 (MLAY…VSGT), 330-350 (VLYL…VILF), 374-394 (LGLS…GFFG), and 409-429 (LLVI…ISVI).

This sequence belongs to the complex I subunit 2 family. NDH-1 can be composed of about 15 different subunits; different subcomplexes with different compositions have been identified which probably have different functions.

It localises to the cellular thylakoid membrane. It catalyses the reaction a plastoquinone + NADH + (n+1) H(+)(in) = a plastoquinol + NAD(+) + n H(+)(out). It carries out the reaction a plastoquinone + NADPH + (n+1) H(+)(in) = a plastoquinol + NADP(+) + n H(+)(out). In terms of biological role, NDH-1 shuttles electrons from an unknown electron donor, via FMN and iron-sulfur (Fe-S) centers, to quinones in the respiratory and/or the photosynthetic chain. The immediate electron acceptor for the enzyme in this species is believed to be plastoquinone. Couples the redox reaction to proton translocation, and thus conserves the redox energy in a proton gradient. Cyanobacterial NDH-1 also plays a role in inorganic carbon-concentration. In Prochlorococcus marinus (strain AS9601), this protein is NAD(P)H-quinone oxidoreductase subunit 2.